The sequence spans 177 residues: Peptidyl-tRNA hydrolase (177 aa).

TRNA is bound at residue tyrosine 12. Catalysis depends on histidine 17, which acts as the Proton acceptor. Positions 63, 65, and 111 each coordinate tRNA.

Belongs to the PTH family. Monomer.

The protein resides in the cytoplasm. The catalysed reaction is an N-acyl-L-alpha-aminoacyl-tRNA + H2O = an N-acyl-L-amino acid + a tRNA + H(+). Functionally, hydrolyzes ribosome-free peptidyl-tRNAs (with 1 or more amino acids incorporated), which drop off the ribosome during protein synthesis, or as a result of ribosome stalling. Catalyzes the release of premature peptidyl moieties from peptidyl-tRNA molecules trapped in stalled 50S ribosomal subunits, and thus maintains levels of free tRNAs and 50S ribosomes. This is Peptidyl-tRNA hydrolase from Buchnera aphidicola subsp. Acyrthosiphon pisum (strain 5A).